A 206-amino-acid chain; its full sequence is Protein Nef (206 aa).

The tract at residues 1–46 is disordered; that stretch reads MGNKWSKCSTVGRPAIRERMRRAPAAEGVGPASQDSDKYGALTSSS. Residue Gly-2 is the site of N-myristoyl glycine; by host attachment. Position 6 is a phosphoserine; by host (Ser-6). The acidic; interacts with host PACS1 and PACS2; stabilizes the interaction of NEF/MHC-I with host AP1M1; necessary for MHC-I internalization stretch occupies residues 61 to 65; it reads QEEEE. An SH3-binding; interaction with Src family tyrosine kinases region spans residues 69-78; that stretch reads PVRPQVPLRP. A PxxP; stabilizes the interaction of NEF/MHC-I with host AP1M1; necessary for MHC-I internalization motif is present at residues 72–75; that stretch reads PQVP. Residues 108 to 124 are mediates dimerization, Nef-PTE1 interaction; it reads DILDLWVYNTQGYFPDW. The interval 148-180 is binding to ATP6V1H; it reads VDPREVEEANTGENNSLLHPMSLHGMEDSHREV. A Dileucine internalization motif; necessary for CD4 internalization motif is present at residues 164–165; that stretch reads LL. Residues 174-175 carry the Diacidic; necessary for CD4 internalization motif; it reads ED.

It belongs to the lentivirus primate group Nef protein family. As to quaternary structure, monomer; cytosolic form. Homodimer; membrane bound form. Interacts with Nef associated p21-activated kinase (PAK2); this interaction activates PAK2. Associates with the Nef-MHC-I-AP1 complex; this complex is required for MHC-I internalization. Interacts (via C-terminus) with host PI3-kinase. Interacts with host PACS1; this interaction seems to be weak. Interacts with host PACS2. Interacts with host LCK and MAPK3; these interactions inhibit the kinase activity of the latter. Interacts with host ATP6V1H; this interaction may play a role in CD4 endocytosis. Associates with the CD4-Nef-AP2 complex; this complex is required for CD4 internalization. Interacts with host AP2 subunit alpha and AP2 subunit sigma2. Interacts with TCR-zeta chain; this interaction up-regulates the Fas ligand (FasL) surface expression. Interacts with host HCK, LYN, and SRC; these interactions activate the Src family kinases. Interacts with MAP3K5; this interaction inhibits the Fas and TNFR-mediated death signals. Interacts with beta-COP and PTE1. Interacts with human RACK1; this increases Nef phosphorylation by PKC. Interacts with TP53; this interaction decreases the half-life of TP53, protecting the infected cell against p53-mediated apoptosis. In terms of processing, the virion-associated Nef proteins are cleaved by the viral protease to release the soluble C-terminal core protein. Nef is probably cleaved concomitantly with viral structural proteins on maturation of virus particles. Post-translationally, myristoylated. Phosphorylated on serine residues, probably by host PKCdelta and theta.

It is found in the host cell membrane. The protein localises to the virion. The protein resides in the secreted. Its subcellular location is the host Golgi apparatus membrane. In terms of biological role, factor of infectivity and pathogenicity, required for optimal virus replication. Alters numerous pathways of T-lymphocyte function and down-regulates immunity surface molecules in order to evade host defense and increase viral infectivity. Alters the functionality of other immunity cells, like dendritic cells, monocytes/macrophages and NK cells. Functionally, in infected CD4(+) T-lymphocytes, down-regulates the surface MHC-I, mature MHC-II, CD4, CD28, CCR5 and CXCR4 molecules. Mediates internalization and degradation of host CD4 through the interaction of with the cytoplasmic tail of CD4, the recruitment of AP-2 (clathrin adapter protein complex 2), internalization through clathrin coated pits, and subsequent transport to endosomes and lysosomes for degradation. Diverts host MHC-I molecules to the trans-Golgi network-associated endosomal compartments by an endocytic pathway to finally target them for degradation. MHC-I down-regulation may involve AP-1 (clathrin adapter protein complex 1) or possibly Src family kinase-ZAP70/Syk-PI3K cascade recruited by PACS2. In consequence infected cells are masked for immune recognition by cytotoxic T-lymphocytes. Decreasing the number of immune receptors also prevents reinfection by more HIV particles (superinfection). Down-regulates host SERINC3 and SERINC5 thereby excluding these proteins from the viral particles. Virion infectivity is drastically higher when SERINC3 or SERINC5 are excluded from the viral envelope, because these host antiviral proteins impair the membrane fusion event necessary for subsequent virion penetration. Its function is as follows. Bypasses host T-cell signaling by inducing a transcriptional program nearly identical to that of anti-CD3 cell activation. Interaction with TCR-zeta chain up-regulates the Fas ligand (FasL). Increasing surface FasL molecules and decreasing surface MHC-I molecules on infected CD4(+) cells send attacking cytotoxic CD8+ T-lymphocytes into apoptosis. Plays a role in optimizing the host cell environment for viral replication without causing cell death by apoptosis. Protects the infected cells from apoptosis in order to keep them alive until the next virus generation is ready to strike. Inhibits the Fas and TNFR-mediated death signals by blocking MAP3K5/ASK1. Decreases the half-life of TP53, protecting the infected cell against p53-mediated apoptosis. Inhibits the apoptotic signals regulated by the Bcl-2 family proteins through the formation of a Nef/PI3-kinase/PAK2 complex that leads to activation of PAK2 and induces phosphorylation of host BAD. In terms of biological role, extracellular Nef protein targets CD4(+) T-lymphocytes for apoptosis by interacting with CXCR4 surface receptors. The polypeptide is Protein Nef (Human immunodeficiency virus type 1 group M subtype C (isolate 92BR025) (HIV-1)).